Consider the following 2335-residue polypeptide: Serine/threonine-protein kinase tor1 (2335 aa).

HEAT repeat units follow at residues 1 to 31 (MEYF…SSTK), 164 to 201 (LYIS…VVCQ), 331 to 371 (PYLQ…AVKL), 410 to 449 (PIQE…AREP), 474 to 512 (YSLI…RDPI), 522 to 560 (ESVA…RHLA), 562 to 596 (PDNI…YNPA), 642 to 679 (PYIQ…VEGE), 684 to 722 (DVRG…RSGY), 728 to 766 (LDYP…LDPY), 843 to 880 (VFLP…IIGP), 904 to 923 (LLVI…DEFK), 924 to 961 (FYLP…FGSN), 964 to 1003 (EYMH…SVNF), and 1005 to 1042 (DHAS…QLGY). Residues 1226 to 1781 (VISAHASKCN…VYSLTVSSKS (556 aa)) form the FAT domain. The PI3K/PI4K catalytic domain maps to 1955-2269 (FHHTFEVISS…ARHADYAALS (315 aa)). The segment at 1961-1967 (VISSKQR) is G-loop. Thr1972 carries the post-translational modification Phosphothreonine; by PKB/AKT1. The tract at residues 2134–2142 (GLGDRHPSN) is catalytic loop. The interval 2154 to 2179 (HIDFGDCFEVAMHREKFPEKIPFRLT) is activation loop. Positions 2303–2335 (EQLPVKAQVEKLIQQATAPENLCRCYVGWCSFW) constitute an FATC domain.

The protein belongs to the PI3/PI4-kinase family. As to quaternary structure, the target of rapamycin complex 2 (TORC2) is composed of at least bit61, pop3/wat1, sin1, ste20 and tor1. Post-translationally, phosphorylation at Thr-1972 in the ATP-binding region by AKT1 strongly reduces kinase activity.

The protein localises to the cytoplasm. It catalyses the reaction L-seryl-[protein] + ATP = O-phospho-L-seryl-[protein] + ADP + H(+). The enzyme catalyses L-threonyl-[protein] + ATP = O-phospho-L-threonyl-[protein] + ADP + H(+). Catalytic component of TORC2, which regulates multiple cellular processes to control cell growth in response to environmental signals. In response to signals, TORC2 phosphorylates AGC protein kinase family members. TORC2 is required for cell survival under various stress conditions. TORC2 positively controls G1 cell-cycle arrest, sexual development and amino acid uptake. Positively regulates amino acid uptake through the control of expression of amino acid permeases. Responsible for the phosphorylation of AGC kinase gad8 at 'Ser-527' and 'Ser-546', activating gad8 kinase activity and promoting sexual development. This is Serine/threonine-protein kinase tor1 from Schizosaccharomyces pombe (strain 972 / ATCC 24843) (Fission yeast).